Reading from the N-terminus, the 1132-residue chain is Error-prone DNA polymerase (1132 aa).

It belongs to the DNA polymerase type-C family. DnaE2 subfamily.

The protein localises to the cytoplasm. The catalysed reaction is DNA(n) + a 2'-deoxyribonucleoside 5'-triphosphate = DNA(n+1) + diphosphate. In terms of biological role, DNA polymerase involved in damage-induced mutagenesis and translesion synthesis (TLS). It is not the major replicative DNA polymerase. The sequence is that of Error-prone DNA polymerase from Anaeromyxobacter dehalogenans (strain 2CP-C).